The primary structure comprises 362 residues: Innexin inx1 (362 aa).

The Cytoplasmic segment spans residues 1 to 28; sequence MYKLLGSLKSYLKWQDIQTDNAVFRLHN. The helical transmembrane segment at 29 to 49 threads the bilayer; sequence SFTTVLLLTCSLIITATQYVG. Residues 50-110 are Extracellular-facing; the sequence is QPISCIVNGV…DAKKYYTYYQ (61 aa). Residues 111–131 traverse the membrane as a helical segment; the sequence is WVCFVLFFQAMACYTPKFLWN. Topologically, residues 132–177 are cytoplasmic; that stretch reads KFEGGLMRMIVMGLNITICTREEKEAKRDALLDYLIKHVKRHKLYA. Residues 178 to 198 traverse the membrane as a helical segment; that stretch reads IRYWACEFLCCINIIVQMYLM. Residues 199–267 are Extracellular-facing; sequence NRFFDGEFLS…LPLNIVNEKT (69 aa). The helical transmembrane segment at 268–288 threads the bilayer; sequence YVFIWFWFWILLVLLIGLIVF. Residues 289–362 lie on the Cytoplasmic side of the membrane; sequence RGCIIFMPKF…VEPSKHDRAK (74 aa).

Belongs to the pannexin family. Heterooligomer of Inx2 and ogre. As to expression, in ovary, expressed in follicle cells. Expressed around the periphery of the embryo during cellular blastoderm formation. Repeating epidermal pattern emerges from stage 11, high levels of expression detected along the borders of each segment from stage 13. At stage 13, expressed in the dorsal branch of the tracheal system. During stage 15, detected in a few cells at each of the branch points of the dorsal trunk and at low levels in cardioblasts. In embryos, also expressed in the salivary gland and the hindgut (at protein level). At stage 17, expressed in the dorsal side of the CNS. Expressed in the imaginal wing disk. Expressed in larval CNS and in tissues outside of the CNS. In pupae, expressed in the CNS and in primary, secondary and tertiary pigment cells of the retina.

Its subcellular location is the cell membrane. It is found in the cell junction. The protein localises to the gap junction. The protein resides in the basolateral cell membrane. In terms of biological role, structural component of the gap junctions. Essential for generation and/or maintenance of postembryonic neuroblasts and normal development of optic lobe. In Drosophila melanogaster (Fruit fly), this protein is Innexin inx1 (ogre).